A 314-amino-acid chain; its full sequence is tRNA pseudouridine synthase B (314 aa).

H43 is a binding site for substrate. Catalysis depends on D48, which acts as the Nucleophile. Substrate contacts are provided by Y76, Y179, and L200.

Belongs to the pseudouridine synthase TruB family. Type 1 subfamily.

The enzyme catalyses uridine(55) in tRNA = pseudouridine(55) in tRNA. Functionally, responsible for synthesis of pseudouridine from uracil-55 in the psi GC loop of transfer RNAs. This Escherichia coli O139:H28 (strain E24377A / ETEC) protein is tRNA pseudouridine synthase B.